Here is a 728-residue protein sequence, read N- to C-terminus: Polyribonucleotide nucleotidyltransferase (728 aa).

Mg(2+) contacts are provided by Asp-489 and Asp-495. The KH domain maps to 556-615 (PKIDTIKIDVDKIKIVIGKGGETIDKIIAETGVKIDIDEEGNVSIYSSDQDAINRAKEII). One can recognise an S1 motif domain in the interval 625-693 (DEVYHAKVVR…AKGRVDASMK (69 aa)). The segment at 691–728 (SMKALLPRPPKPEKSDKHHDKGHPHKKHEEAPLTQTEE) is disordered. A compositionally biased stretch (basic and acidic residues) spans 700–709 (PKPEKSDKHH).

The protein belongs to the polyribonucleotide nucleotidyltransferase family. Mg(2+) is required as a cofactor.

The protein resides in the cytoplasm. It catalyses the reaction RNA(n+1) + phosphate = RNA(n) + a ribonucleoside 5'-diphosphate. In terms of biological role, involved in mRNA degradation. Catalyzes the phosphorolysis of single-stranded polyribonucleotides processively in the 3'- to 5'-direction. This is Polyribonucleotide nucleotidyltransferase from Streptococcus gordonii (strain Challis / ATCC 35105 / BCRC 15272 / CH1 / DL1 / V288).